The sequence spans 230 residues: CRP-like protein Clp (230 aa).

Position 18–139 (18–139 (PSLTLDAGTI…APRILYAIGV (122 aa))) interacts with a nucleoside 3',5'-cyclic phosphate. An HTH crp-type domain is found at 158–230 (LDVTDRIVRT…GKTVVLYGTR (73 aa)). A DNA-binding region (H-T-H motif) is located at residues 190–209 (RQELARLVGCSREMAGRVLK).

As to quaternary structure, homodimer.

The protein resides in the cytoplasm. With respect to regulation, allosterically inhibited by cyclic di-GMP (c-di-GMP), which binds to Clp and abolishes its ability to bind its target gene promoter. Global transcriptional regulator that regulates virulence factors production by activating or repressing the expression of a large set of genes in diffusible signal factor (DSF) pathway. This chain is CRP-like protein Clp (clp), found in Xanthomonas campestris pv. campestris (strain 8004).